The chain runs to 759 residues: MTQPVRRQPFTATITGSPRIGPRRELKRATEGYWAGRTSRSELEAVAATLRRDTWSALAAAGLDSVPVNTFSYYDQMLDTAVLLGALPPRVSPVSDGLDRYFAAARGTDQIAPLEMTKWFDTNYHYLVPEIGPSTTFTLHPGKVLAELKEALGQGIPARPVIIGPITFLLLSKAVDGAGAPIERLEELVPVYSELLSLLADGGAQWVQFDEPALVTDLSPDAPALAEAVYTALCSVSNRPAIYVATYFGDPGAALPALARTPVEAIGVDLVAGADTSVAGVPELAGKTLVAGVVDGRNVWRTDLEAALGTLATLLGSAATVAVSTSCSTLHVPYSLEPETDLDDALRSWLAFGAEKVREVVVLARALRDGHDAVADEIASSRAAIASRKRDPRLHNGQIRARIEAIVASGAHRGNAAQRRASQDARLHLPPLPTTTIGSYPQTSAIRVARAALRAGEIDEAEYVRRMRQEITEVIALQERLGLDVLVHGEPERNDMVQYFAEQLAGFFATQNGWVQSYGSRCVRPPILYGDVSRPRAMTVEWITYAQSLTDKPVKGMLTGPVTILAWSFVRDDQPLADTANQVALAIRDETVDLQSAGIAVIQVDEPALRELLPLRRADQAEYLRWAVGAFRLATSGVSDATQIHTHLCYSEFGEVIGAIADLDADVTSIEAARSHMEVLDDLNAIGFANGVGPGVYDIHSPRVPSAEEMADSLRAALRAVPAERLWVNPDCGLKTRNVDEVTASLHNMVAAAREVRAG.

Positions 1–16 are enriched in polar residues; sequence MTQPVRRQPFTATITG. A disordered region spans residues 1 to 22; it reads MTQPVRRQPFTATITGSPRIGP. Residues 24-27 and lysine 118 contribute to the 5-methyltetrahydropteroyltri-L-glutamate site; that span reads RELK. L-homocysteine is bound by residues 437 to 439 and glutamate 490; that span reads IGS. Residues 437 to 439 and glutamate 490 each bind L-methionine; that span reads IGS. Residues 521–522 and tryptophan 567 each bind 5-methyltetrahydropteroyltri-L-glutamate; that span reads RC. Residue aspartate 605 coordinates L-homocysteine. Residue aspartate 605 coordinates L-methionine. Position 611 (glutamate 611) interacts with 5-methyltetrahydropteroyltri-L-glutamate. Residues histidine 647, cysteine 649, and glutamate 671 each coordinate Zn(2+). The active-site Proton donor is the histidine 700. Cysteine 732 is a Zn(2+) binding site.

This sequence belongs to the vitamin-B12 independent methionine synthase family. The cofactor is Zn(2+).

The enzyme catalyses 5-methyltetrahydropteroyltri-L-glutamate + L-homocysteine = tetrahydropteroyltri-L-glutamate + L-methionine. The protein operates within amino-acid biosynthesis; L-methionine biosynthesis via de novo pathway; L-methionine from L-homocysteine (MetE route): step 1/1. In terms of biological role, catalyzes the transfer of a methyl group from 5-methyltetrahydrofolate to homocysteine resulting in methionine formation. This chain is 5-methyltetrahydropteroyltriglutamate--homocysteine methyltransferase, found in Mycobacterium tuberculosis (strain ATCC 25177 / H37Ra).